The sequence spans 624 residues: DNA-directed RNA polymerase subunit gamma (624 aa).

The Zn(2+) site is built by Cys-70, Cys-72, Cys-85, and Cys-88. Mg(2+) contacts are provided by Asp-466, Asp-468, and Asp-470.

The protein belongs to the RNA polymerase beta' chain family. RpoC1 subfamily. In cyanobacteria the RNAP catalytic core is composed of 2 alpha, 1 beta, 1 beta', 1 gamma and 1 omega subunit. When a sigma factor is associated with the core the holoenzyme is formed, which can initiate transcription. Requires Mg(2+) as cofactor. It depends on Zn(2+) as a cofactor.

The enzyme catalyses RNA(n) + a ribonucleoside 5'-triphosphate = RNA(n+1) + diphosphate. Its function is as follows. DNA-dependent RNA polymerase catalyzes the transcription of DNA into RNA using the four ribonucleoside triphosphates as substrates. This chain is DNA-directed RNA polymerase subunit gamma, found in Synechococcus sp. (strain ATCC 27144 / PCC 6301 / SAUG 1402/1) (Anacystis nidulans).